The chain runs to 337 residues: BRI1 kinase inhibitor 1 (337 aa).

Polar residues predominate over residues 1–25 (METNLQQVKNSSQTFSEKQNPKQEA). Disordered regions lie at residues 1–38 (METN…SSPS) and 51–72 (SSSS…SSYQ). A compositionally biased stretch (low complexity) spans 26–38 (SPSPISSTCSSPS). Tyrosine 211 carries the post-translational modification Phosphotyrosine. The disordered stretch occupies residues 270–310 (SAPASMRTSPTNSGHLRVSTAGLSSSSGSTSSSSSDSTMEE). A compositionally biased stretch (low complexity) spans 288–310 (STAGLSSSSGSTSSSSSDSTMEE).

In terms of assembly, interacts (via C-terminus) with BRI1 (via kinase domain). Post-translationally, phosphorylated on Tyr-211 in response to brassinosteroid perception, leading to its inactivation: once phosphorylated, displaced into the cytosol where it is inactive. Expressed in leaves, petioles, shoot apices, hypocotyls, roots and flowers.

The protein localises to the cell membrane. It is found in the cytoplasm. In terms of biological role, negative regulator of brassinosteroid signaling. When associated to the membrane, limits the interaction of BRI1 with BAK1 by binding to the kinase-inactive form of BRI1. This chain is BRI1 kinase inhibitor 1 (BKI1), found in Arabidopsis thaliana (Mouse-ear cress).